The following is a 1355-amino-acid chain: Patatin-like phospholipase domain-containing protein 6 (1355 aa).

At Met1–Leu43 the chain is on the lumenal side. Residue Asn9 is glycosylated (N-linked (GlcNAc...) asparagine). Residues Gly44 to Val64 traverse the membrane as a helical segment. Residues Arg65 to Ala1355 lie on the Cytoplasmic side of the membrane. Val179–Arg306 provides a ligand contact to a nucleoside 3',5'-cyclic phosphate. A Phosphoserine modification is found at Ser338. Positions Ser338–Pro395 are disordered. Residues Thr343–Glu361 are compositionally biased toward polar residues. At Thr345 the chain carries Phosphothreonine. Ser346, Ser356, and Ser405 each carry phosphoserine. A nucleoside 3',5'-cyclic phosphate-binding positions include Glu492–Arg614 and Thr610–Lys730. The 167-residue stretch at Leu961–Arg1127 folds into the PNPLA domain. Residues Gly965 to Gly970 carry the GXGXXG motif. The GXSXG motif lies at Gly992–Gly996. Ser994 functions as the Nucleophile in the catalytic mechanism. The active-site Proton acceptor is the Asp1114. Positions Asp1114 to Gly1116 match the DGA/G motif. The segment at Ser1286–Ala1355 is disordered. Positions Ala1293 to Gly1309 are enriched in acidic residues.

Belongs to the NTE family. Glycosylated. Expressed in brain, testes and kidney (at protein level). Expressed ubiquitously in brain of young mice. Reaching adulthood, there is a most prominent expression in Purkinje cells, granule cells and pyramidal neurons of the hippocampus and some large neurons in the medulla oblongata, nucleus dentatus and pons.

Its subcellular location is the endoplasmic reticulum membrane. The enzyme catalyses a 1-acyl-sn-glycero-3-phosphocholine + H2O = sn-glycerol 3-phosphocholine + a fatty acid + H(+). It carries out the reaction 1-hexadecanoyl-sn-glycero-3-phosphocholine + H2O = sn-glycerol 3-phosphocholine + hexadecanoate + H(+). The catalysed reaction is 1-hexadecanoyl-sn-glycero-3-phosphate + H2O = sn-glycerol 3-phosphate + hexadecanoate + H(+). It catalyses the reaction 1-(9Z-octadecenoyl)-sn-glycero-3-phosphocholine + H2O = sn-glycerol 3-phosphocholine + (9Z)-octadecenoate + H(+). The enzyme catalyses 1-hexadecanoylglycerol + H2O = glycerol + hexadecanoate + H(+). It carries out the reaction 2-hexadecanoylglycerol + H2O = glycerol + hexadecanoate + H(+). The catalysed reaction is 1-(9Z-octadecenoyl)-glycerol + H2O = glycerol + (9Z)-octadecenoate + H(+). It catalyses the reaction 2-(9Z-octadecenoyl)-glycerol + H2O = glycerol + (9Z)-octadecenoate + H(+). The enzyme catalyses 2-(5Z,8Z,11Z,14Z-eicosatetraenoyl)-glycerol + H2O = glycerol + (5Z,8Z,11Z,14Z)-eicosatetraenoate + H(+). Inhibited by a series a OPs such as mipafox (MPX), phenyl saligenin phosphate (PSP), phenyl dipentyl phosphinate (PDPP), diisopropyl fluorophosphate and paraoxon. In terms of biological role, phospholipase B that deacylates intracellular phosphatidylcholine (PtdCho), generating glycerophosphocholine (GroPtdCho). This deacylation occurs at both sn-2 and sn-1 positions of PtdCho. Catalyzes the hydrolysis of several naturally occurring membrane-associated lipids. Hydrolyzes lysophospholipids and monoacylglycerols, preferring the 1-acyl to the 2-acyl isomer. Does not catalyze hydrolysis of di- or triacylglycerols or fatty acid amides. In Mus musculus (Mouse), this protein is Patatin-like phospholipase domain-containing protein 6 (Pnpla6).